The sequence spans 167 residues: Elafin (167 aa).

The first 21 residues, 1–21, serve as a signal peptide directing secretion; that stretch reads MRSRSFLVLVVVFLICGTLVA. The propeptide occupies 22-70; sequence QAAGRIRRPKGKGTKKILALVKGQGPVRGKDQVKGQGPVKGQDLGKSQD. 12 tandem repeats follow at residues 44–49, 50–55, 56–61, 62–67, 68–73, 74–79, 80–85, 86–91, 92–97, 98–103, 104–109, and 110–115. The tract at residues 44–115 is 12 X 6 AA tandem repeats of [GSAL]-[QEK]-[DGLP]-[APSLQ]-[VGDFI]-[KR]; the sequence is GQGPVRGKDQ…DPVKAQPAIK (72 aa). A disordered region spans residues 46–104; it reads GPVRGKDQVKGQGPVKGQDLGKSQDPVKAQLPDKGQDLGKGEDSVKGQDPFKAQLPDKL. A 2 X tandem repeats of SVP-1 like motif region spans residues 78 to 126; it reads DKGQDLGKGEDSVKGQDPFKAQLPDKLQDPVKAQPAIKRLILLTKPGSC. Over residues 79 to 91 the composition is skewed to basic and acidic residues; that stretch reads KGQDLGKGEDSVK. 2 SVP-1 clotting repeats span residues 80 to 101 and 104 to 126; these read GQDL…AQLP and LQDP…PGSC. The WAP domain occupies 119 to 167; that stretch reads LLTKPGSCPRILIRCLMVNPPNRCLSDAQCPGLKKCCEGFCGKACMDPK. Intrachain disulfides connect C126-C155, C133-C159, C142-C154, and C148-C163.

Trachea and large intestine.

Neutrophil and pancreatic elastase-specific inhibitor of skin. It may prevent elastase-mediated tissue proteolysis. The sequence is that of Elafin from Sus scrofa (Pig).